Here is a 3326-residue protein sequence, read N- to C-terminus: Protein unc-80 homolog (3326 aa).

The span at 152 to 164 (IENQGSPGQPCRS) shows a compositional bias: polar residues. 4 disordered regions span residues 152–178 (IENQGSPGQPCRSSSHDEEENNRRKTF), 243–267 (KRSSPINSQSQTCESPNQDTRQQGE), 283–317 (PKATISGCHQGNSFDGSLSSQTSQERGPSHSRASL), and 450–469 (RKEDRERKGSIPFHHTGKRR). Ser257 bears the Phosphoserine mark. Positions 283-308 (PKATISGCHQGNSFDGSLSSQTSQER) are enriched in polar residues. At Ser526 the chain carries Phosphoserine. Disordered regions lie at residues 536-560 (LSARHSHSHHTLVSDLPDHSNSHGE), 697-785 (RKKS…DNIP), 967-1076 (GKKV…SRRI), 1405-1430 (EDSKDSLHSSSHTIKSDAGAEEKKVP), and 1469-1516 (SSKL…LSNA). 2 stretches are compositionally biased toward basic and acidic residues: residues 551 to 560 (LPDHSNSHGE) and 699 to 713 (KSENKENESVEKRPS). Residues 723–737 (SSSSTSGFGAPSASG) show a composition bias toward low complexity. The segment covering 738–770 (AGDGGGEEGGGGDGGGGGGGGDGGGGGGGGGGP) has biased composition (gly residues). Residues 772–783 (EKNEKNQEKDDN) are compositionally biased toward basic and acidic residues. Over residues 1038–1055 (SQSAASDTSSQSEQDTSE) the composition is skewed to low complexity. Positions 1418-1429 (IKSDAGAEEKKV) are enriched in basic and acidic residues. 2 consecutive transmembrane segments (helical) span residues 2336-2356 (PFVLQLFASVAPLLEFPDAAN) and 2466-2486 (IAATAALATSLQALLYSVEVL). The tract at residues 2493-2515 (PQMSRSDQGHKGTTTANHTMSSG) is disordered. The next 2 helical transmembrane spans lie at 2853–2873 (GLAESTSQAAYLALKVILVCF) and 2899–2919 (LALWDFLDFIVRTRIPIFVLL). Residues 3010–3032 (NTGTGTVWEQDSEPSQQASQDTL) show a composition bias toward polar residues. Positions 3010-3052 (NTGTGTVWEQDSEPSQQASQDTLSRTDEEDEENDSVSMPSVVS) are disordered. Ser3110 bears the Phosphoserine mark. Disordered stretches follow at residues 3122-3222 (LQQP…VLTS), 3236-3271 (PKQSEPLLAEEGEKKEDEEIQGATAHCPLSTQLSDP), and 3296-3326 (NGTENPLLSSQFTFTPPELGDTDSALDESHV). The segment covering 3127-3136 (GRKRGLRQLR) has biased composition (basic residues). The segment covering 3157–3168 (LSTTRRSIQPKT) has biased composition (polar residues). The span at 3298 to 3309 (TENPLLSSQFTF) shows a compositional bias: polar residues. A compositionally biased stretch (acidic residues) spans 3315 to 3326 (GDTDSALDESHV).

It belongs to the unc-80 family. In terms of assembly, NALCN complex consists of NALCN and auxiliary subunits, UNC79, UNC80 and NACL1. These auxiliary subunits are essential for the NALCN complex function. Interacts (via N-terminus half) with NALCN; this interaction facilitates NALCN surface localization. Interacts (via C-terminus) with UNC79. UNC80 bridges NALCN to UNC79. In terms of processing, phosphorylated on tyrosine residues. As to expression, expressed almost exclusively in the brain. Expressed in hippocampus and ventral tegmental area neurons.

Its subcellular location is the cell membrane. It is found in the cell projection. It localises to the dendrite. In terms of biological role, auxiliary subunit of the NALCN sodium channel complex. The NALCN sodium channel complex is a voltage-gated ion channel responsible for the resting Na(+) permeability that controls neuronal excitability. This complex is activated by neuropeptides substance P, neurotensin. In addition, the channel is inhibited by extracellular Ca(2+) through the Ca(2+)-sensing receptor. UNC80 is essential for NALCN sensitivity to extracellular calcium. The protein is Protein unc-80 homolog (Unc80) of Mus musculus (Mouse).